The following is a 489-amino-acid chain: Glucose-6-phosphate 1-dehydrogenase (489 aa).

Arg50 and Lys151 together coordinate NADP(+). Residues His181, Lys185, Glu219, and Asp238 each contribute to the substrate site. His243 serves as the catalytic Proton acceptor. Substrate-binding residues include Lys341 and Lys346.

This sequence belongs to the glucose-6-phosphate dehydrogenase family. As to quaternary structure, homodimer.

The enzyme catalyses D-glucose 6-phosphate + NADP(+) = 6-phospho-D-glucono-1,5-lactone + NADPH + H(+). It functions in the pathway carbohydrate degradation; pentose phosphate pathway; D-ribulose 5-phosphate from D-glucose 6-phosphate (oxidative stage): step 1/3. Its function is as follows. Catalyzes the oxidation of glucose 6-phosphate to 6-phosphogluconolactone. The chain is Glucose-6-phosphate 1-dehydrogenase from Gluconobacter oxydans (strain 621H) (Gluconobacter suboxydans).